The chain runs to 442 residues: Chromosomal replication initiator protein DnaA (442 aa).

A domain I, interacts with DnaA modulators region spans residues M1–A84. Positions A84 to N105 are domain II. The interval N106–A322 is domain III, AAA+ region. The ATP site is built by G150, G152, K153, and T154. A domain IV, binds dsDNA region spans residues Q323 to N442.

Belongs to the DnaA family. In terms of assembly, oligomerizes as a right-handed, spiral filament on DNA at oriC.

The protein localises to the cytoplasm. Plays an essential role in the initiation and regulation of chromosomal replication. ATP-DnaA binds to the origin of replication (oriC) to initiate formation of the DNA replication initiation complex once per cell cycle. Binds the DnaA box (a 9 base pair repeat at the origin) and separates the double-stranded (ds)DNA. Forms a right-handed helical filament on oriC DNA; dsDNA binds to the exterior of the filament while single-stranded (ss)DNA is stabiized in the filament's interior. The ATP-DnaA-oriC complex binds and stabilizes one strand of the AT-rich DNA unwinding element (DUE), permitting loading of DNA polymerase. After initiation quickly degrades to an ADP-DnaA complex that is not apt for DNA replication. Binds acidic phospholipids. The protein is Chromosomal replication initiator protein DnaA of Methylococcus capsulatus (strain ATCC 33009 / NCIMB 11132 / Bath).